The chain runs to 397 residues: Lysophospholipid transporter LplT (397 aa).

Residues 1–17 are Periplasmic-facing; that stretch reads MSESVHTNTSLWSKGMK. A helical transmembrane segment spans residues 18-38; that stretch reads AVIVAQFLSAFGDNALLFATL. Residues 39–52 lie on the Cytoplasmic side of the membrane; that stretch reads ALLKAQFYPEWSQP. Residues 53-73 form a helical membrane-spanning segment; it reads VLQMVFVGAYILFAPFVGQVA. Residues 74–90 lie on the Periplasmic side of the membrane; that stretch reads DSFAKGRVMMFANGLKL. The helical transmembrane segment at 91 to 111 threads the bilayer; that stretch reads LGAASICFGFNPFVGYTLVGI. Topologically, residues 112–144 are cytoplasmic; sequence GAAAYSPAKYGILGELTTGDKLVKANGLMEAST. Residues 145–165 traverse the membrane as a helical segment; it reads IAAILLGSVAGGVLADLHVLV. Position 166 (A166) is a topological domain, periplasmic. A helical transmembrane segment spans residues 167 to 187; it reads LAACALAYAGAVAANIYIPKL. Over 188–226 the chain is Cytoplasmic; that stretch reads AAARPGQSWNVLKMTCSFKSACTSLWQNGETRFSLVGTS. The helical transmembrane segment at 227-247 threads the bilayer; it reads LFWGAGVTLRFLLVLWVPVAL. Topologically, residues 248 to 256 are periplasmic; it reads GITDNATPT. The chain crosses the membrane as a helical span at residues 257–277; the sequence is YLNAMVAIGIVLGAGAAAKLV. Residues 278-280 lie on the Cytoplasmic side of the membrane; the sequence is TLE. The chain crosses the membrane as a helical span at residues 281–301; it reads TVSRCMPAGILIGVVVLFFSL. Over 302-304 the chain is Periplasmic; sequence QHE. A helical membrane pass occupies residues 305-325; it reads LLPAYALLMLIGVLGGFFVVP. Topologically, residues 326–343 are cytoplasmic; sequence LNALLQERGKKSVGAGNA. A helical membrane pass occupies residues 344-364; it reads IAVQNLGENSAMLLMLGIYSL. The Periplasmic segment spans residues 365–366; the sequence is AV. The helical transmembrane segment at 367 to 387 threads the bilayer; the sequence is LVGIPVVPIGIGFGTLFALAI. The Cytoplasmic segment spans residues 388-397; it reads TALWIWQRRH.

This sequence belongs to the major facilitator superfamily. LplT (TC 2.A.1.42) family.

Its subcellular location is the cell inner membrane. In terms of biological role, catalyzes the facilitated diffusion of 2-acyl-glycero-3-phosphoethanolamine (2-acyl-GPE) into the cell. This is Lysophospholipid transporter LplT from Escherichia fergusonii (strain ATCC 35469 / DSM 13698 / CCUG 18766 / IAM 14443 / JCM 21226 / LMG 7866 / NBRC 102419 / NCTC 12128 / CDC 0568-73).